The following is a 225-amino-acid chain: PKHD-type hydroxylase YbiX (225 aa).

The region spanning 78 to 177 is the Fe2OG dioxygenase domain; that stretch reads TLSTPLFNRY…RVASFMWIQS (100 aa). Histidine 96, aspartate 98, and histidine 158 together coordinate Fe cation. Arginine 168 lines the 2-oxoglutarate pocket.

Fe(2+) is required as a cofactor. Requires L-ascorbate as cofactor.

The protein is PKHD-type hydroxylase YbiX of Shigella flexneri serotype 5b (strain 8401).